The sequence spans 177 residues: Large ribosomal subunit protein uL6 (177 aa).

The protein belongs to the universal ribosomal protein uL6 family. In terms of assembly, part of the 50S ribosomal subunit.

Its function is as follows. This protein binds to the 23S rRNA, and is important in its secondary structure. It is located near the subunit interface in the base of the L7/L12 stalk, and near the tRNA binding site of the peptidyltransferase center. The polypeptide is Large ribosomal subunit protein uL6 (Brucella melitensis biotype 1 (strain ATCC 23456 / CCUG 17765 / NCTC 10094 / 16M)).